The following is a 1188-amino-acid chain: Phospholipid-transporting ATPase IB (1188 aa).

Topologically, residues 1–94 (MLNGAGLDKA…PRFLYEQIRR (94 aa)) are cytoplasmic. At Thr-45 the chain carries Phosphothreonine. A helical transmembrane segment spans residues 95–115 (AANAFFLFIALLQQIPDVSPT). Residues 116–119 (GRYT) are Extracellular-facing. Residues 120-140 (TLVPLIIILTIAGIKEIVEDF) form a helical membrane-spanning segment. Residues 141-316 (KRHKADNAVN…SNVEKVTNVQ (176 aa)) are Cytoplasmic-facing. Residues 317–337 (ILVLFGILLVMALVSSAGALY) traverse the membrane as a helical segment. The Extracellular portion of the chain corresponds to 338-364 (WNRSHGEKNWYIKKMDTTSDNFGYNLL). The helical transmembrane segment at 365 to 385 (TFIILYNNLIPISLLVTLEVV) threads the bilayer. Over 386 to 887 (KYTQALFINW…CILYCFYKNV (502 aa)) the chain is Cytoplasmic. Residue Asp-428 is the 4-aspartylphosphate intermediate of the active site. Asp-428, Lys-429, Thr-430, Glu-528, Phe-569, Lys-592, Arg-625, Thr-705, Gly-706, Asp-707, Arg-795, and Lys-801 together coordinate ATP. Position 428 (Asp-428) interacts with Mg(2+). Residue Thr-430 coordinates Mg(2+). A Mg(2+)-binding site is contributed by Asp-821. The ATP site is built by Asn-824 and Asp-825. Asp-825 serves as a coordination point for Mg(2+). The chain crosses the membrane as a helical span at residues 888 to 908 (VLYIIELWFAFVNGFSGQILF). At 909-910 (ER) the chain is on the extracellular side. Residues 911–931 (WCIGLYNVIFTALPPFTLGIF) form a helical membrane-spanning segment. At 932 to 959 (ERSCTQESMLRFPQLYKITQNGEGFNTK) the chain is on the cytoplasmic side. Residues 960-980 (VFWGHCINALVHSLILFWFPM) traverse the membrane as a helical segment. Residues 981–997 (KALEHDTVLTSGHATDY) lie on the Extracellular side of the membrane. A helical transmembrane segment spans residues 998–1018 (LFVGNIVYTYVVVTVCLKAGL). The Cytoplasmic segment spans residues 1019–1028 (ETTAWTKFSH). The chain crosses the membrane as a helical span at residues 1029–1049 (LAVWGSMLTWLVFFGIYSTIW). The Extracellular portion of the chain corresponds to 1050–1063 (PTIPIAPDMRGQAT). The chain crosses the membrane as a helical span at residues 1064–1084 (MVLSSAHFWLGLFLVPTACLI). The Cytoplasmic segment spans residues 1085–1188 (EDVAWRAAKH…DTTKKKSRKK (104 aa)). The segment at 1162 to 1188 (SQEEHGAVSQEEVIRAYDTTKKKSRKK) is disordered. Residues 1163–1182 (QEEHGAVSQEEVIRAYDTTK) show a composition bias toward basic and acidic residues.

This sequence belongs to the cation transport ATPase (P-type) (TC 3.A.3) family. Type IV subfamily. In terms of assembly, component of a P4-ATPase flippase complex which consists of a catalytic alpha subunit and an accessory beta subunit. Interacts with TMEM30A to form a flippase complex. Mg(2+) serves as cofactor. Strongly expressed in the brain, cerebellum, retina and testis.

The protein localises to the membrane. Its subcellular location is the golgi apparatus membrane. It localises to the endosome membrane. It is found in the cell membrane. The protein resides in the photoreceptor outer segment membrane. The protein localises to the photoreceptor inner segment membrane. It carries out the reaction ATP + H2O + phospholipidSide 1 = ADP + phosphate + phospholipidSide 2.. It catalyses the reaction a 1,2-diacyl-sn-glycero-3-phospho-L-serine(out) + ATP + H2O = a 1,2-diacyl-sn-glycero-3-phospho-L-serine(in) + ADP + phosphate + H(+). The enzyme catalyses a 1,2-diacyl-sn-glycero-3-phosphoethanolamine(in) + ATP + H2O = a 1,2-diacyl-sn-glycero-3-phosphoethanolamine(out) + ADP + phosphate + H(+). In terms of biological role, catalytic component of a P4-ATPase flippase complex which catalyzes the hydrolysis of ATP coupled to the transport of aminophospholipids from the outer to the inner leaflet of various membranes and ensures the maintenance of asymmetric distribution of phospholipids. Able to translocate phosphatidylserine, but not phosphatidylcholine. Phospholipid translocation also seems to be implicated in vesicle formation and in uptake of lipid signaling molecules. Reconstituted to liposomes, the ATP8A2:TMEM30A flippase complex predominantly transports phosphatidylserine (PS) and to a lesser extent phosphatidylethanolamine (PE). Phospholipid translocation is not associated with a countertransport of an inorganic ion or other charged substrate from the cytoplasmic side toward the exoplasm in connection with the phosphorylation from ATP. ATP8A2:TMEM30A may be involved in regulation of neurite outgrowth. Proposed to function in the generation and maintenance of phospholipid asymmetry in photoreceptor disk membranes and neuronal axon membranes. May be involved in vesicle trafficking in neuronal cells. Required for normal visual and auditory function; involved in photoreceptor and inner ear spiral ganglion cell survival. The sequence is that of Phospholipid-transporting ATPase IB from Homo sapiens (Human).